A 290-amino-acid chain; its full sequence is Glutamate racemase (290 aa).

Substrate-binding positions include 32–33 and 64–65; these read DS and YG. Cys96 functions as the Proton donor/acceptor in the catalytic mechanism. 97–98 contributes to the substrate binding site; the sequence is NT. Cys208 acts as the Proton donor/acceptor in catalysis. 209-210 contacts substrate; it reads TH.

Belongs to the aspartate/glutamate racemases family.

It catalyses the reaction L-glutamate = D-glutamate. It participates in cell wall biogenesis; peptidoglycan biosynthesis. Provides the (R)-glutamate required for cell wall biosynthesis. The polypeptide is Glutamate racemase (Sodalis glossinidius (strain morsitans)).